The sequence spans 199 residues: Holliday junction branch migration complex subunit RuvA (199 aa).

The interval 1-63 is domain I; that stretch reads MIGCLIGEVF…EDAQQLYGFS (63 aa). The interval 64 to 142 is domain II; that stretch reads DAQEKTIFRT…TLAQGTSSAA (79 aa). The flexible linker stretch occupies residues 143–150; it reads ALPQIQFV. The segment at 150–199 is domain III; sequence VSNSPVAEAEAALQSLGYKPLEAQKAVAAVKADYTESADIIRAALKSMMK.

The protein belongs to the RuvA family. As to quaternary structure, homotetramer. Forms an RuvA(8)-RuvB(12)-Holliday junction (HJ) complex. HJ DNA is sandwiched between 2 RuvA tetramers; dsDNA enters through RuvA and exits via RuvB. An RuvB hexamer assembles on each DNA strand where it exits the tetramer. Each RuvB hexamer is contacted by two RuvA subunits (via domain III) on 2 adjacent RuvB subunits; this complex drives branch migration. In the full resolvosome a probable DNA-RuvA(4)-RuvB(12)-RuvC(2) complex forms which resolves the HJ.

The protein resides in the cytoplasm. Its function is as follows. The RuvA-RuvB-RuvC complex processes Holliday junction (HJ) DNA during genetic recombination and DNA repair, while the RuvA-RuvB complex plays an important role in the rescue of blocked DNA replication forks via replication fork reversal (RFR). RuvA specifically binds to HJ cruciform DNA, conferring on it an open structure. The RuvB hexamer acts as an ATP-dependent pump, pulling dsDNA into and through the RuvAB complex. HJ branch migration allows RuvC to scan DNA until it finds its consensus sequence, where it cleaves and resolves the cruciform DNA. The polypeptide is Holliday junction branch migration complex subunit RuvA (Acinetobacter baumannii (strain SDF)).